The following is a 624-amino-acid chain: Phosphomethylpyrimidine synthase (624 aa).

Residues 75–99 (SPWIESRGDTESYTGRTPFALDDGL) form a disordered region. Residues N226, M255, Y284, H320, 340–342 (SRG), 381–384 (DGLR), and E420 each bind substrate. H424 provides a ligand contact to Zn(2+). Position 447 (Y447) interacts with substrate. H488 contacts Zn(2+). [4Fe-4S] cluster contacts are provided by C568, C571, and C576.

Belongs to the ThiC family. In terms of assembly, homodimer. [4Fe-4S] cluster is required as a cofactor.

It catalyses the reaction 5-amino-1-(5-phospho-beta-D-ribosyl)imidazole + S-adenosyl-L-methionine = 4-amino-2-methyl-5-(phosphooxymethyl)pyrimidine + CO + 5'-deoxyadenosine + formate + L-methionine + 3 H(+). The protein operates within cofactor biosynthesis; thiamine diphosphate biosynthesis. Functionally, catalyzes the synthesis of the hydroxymethylpyrimidine phosphate (HMP-P) moiety of thiamine from aminoimidazole ribotide (AIR) in a radical S-adenosyl-L-methionine (SAM)-dependent reaction. The protein is Phosphomethylpyrimidine synthase of Albidiferax ferrireducens (strain ATCC BAA-621 / DSM 15236 / T118) (Rhodoferax ferrireducens).